The chain runs to 428 residues: Synaptotagmin-1 (428 aa).

Residues 1-67 (MDSLLARVKR…KDKLINEIEN (67 aa)) are Vesicular-facing. Residues 16–50 (ALNPAQEGVTGGPDAAGLPDVSTSSPGGGGAGDKL) form a disordered region. A helical membrane pass occupies residues 68 to 92 (LPIWAIVLIIAGSLLFLVCCVYCVC). Residues 93-428 (RRSCRKRKKK…HTLQEVPEKN (336 aa)) lie on the Cytoplasmic side of the membrane. Ser123 is modified (phosphoserine; by PRKC2). Residues 147-395 (STKSEVKLGK…PIGRCVLGCN (249 aa)) are phospholipid binding. 2 C2 domains span residues 153-272 (KLGK…EDWK) and 286-419 (KLGD…AQWH). Ca(2+) contacts are provided by Asp184, Asp190, Asp242, Phe243, Asp244, Ser247, Lys248, Asp250, Asp317, Asp323, Asp377, and Asp379.

The protein belongs to the synaptotagmin family. Binds SNAP25. Isoform 3 binds SNAP25 with higher affinity. It depends on Ca(2+) as a cofactor.

The protein resides in the cytoplasmic vesicle. The protein localises to the secretory vesicle. It is found in the synaptic vesicle membrane. It localises to the synapse. Acts as inhibitor of neurotransmitter release. Overexpression leads to a decrease in the amplitude of the excitatory postsynaptic potential in dissected cholinergic and glutaminergic neurons while depletion with antisense oligonucleotides leads to an increase. Overexpression of isoform 1 blocks the reversal of synaptic depression by serotonin in sensory neurons. The sequence is that of Synaptotagmin-1 (SYT1) from Aplysia californica (California sea hare).